Here is a 352-residue protein sequence, read N- to C-terminus: tRNA uridine(34) hydroxylase (352 aa).

The region spanning 146-240 (DNPDTLFVDM…YARKAREQGL (95 aa)) is the Rhodanese domain. Residue Cys200 is the Cysteine persulfide intermediate of the active site. The span at 315 to 328 (ETEQRARRAGRENG) shows a compositional bias: basic and acidic residues. The disordered stretch occupies residues 315-352 (ETEQRARRAGRENGAKIFNKSRHRLQDGLNSTSLQSVE). The segment covering 342–352 (GLNSTSLQSVE) has biased composition (polar residues).

The protein belongs to the TrhO family.

It catalyses the reaction uridine(34) in tRNA + AH2 + O2 = 5-hydroxyuridine(34) in tRNA + A + H2O. Functionally, catalyzes oxygen-dependent 5-hydroxyuridine (ho5U) modification at position 34 in tRNAs. In Photorhabdus laumondii subsp. laumondii (strain DSM 15139 / CIP 105565 / TT01) (Photorhabdus luminescens subsp. laumondii), this protein is tRNA uridine(34) hydroxylase.